The primary structure comprises 370 residues: MVWALPRTSSPSCIAPSYKPDSGWIKMSAEWLIDWSCLLNGLRDLIAGCIQAVRDCNSFALTTVICLLMLFAWYCYRVGKDQPRSPFATVNLLIQSSEAKGLQNGFAYCHSRECVRCTHNDGLNQKLYHNLQEYAKRYSWSGMGRIHKGIREQGRYLNNRPSIQKPEVFFLPDLPTMPYFPRDAQKHDVELLEQNFATILSEFEAIYKAFSNCSLPQGWKVNSTPSGEWFTFYLVNQGVTIPSNCKKCPRTYRLLGNLRTFIGNNVFGNACISVLTPGTVITEHYGPTNIRIRCHLGLRIPGNCELVVGGEPQCWAEGHCLLFDDSFLHTAFHEGSAEEGPRVIFMVDLWHPNVAAAERQALDSIFAPGR.

The Cytoplasmic portion of the chain corresponds to 1–57; the sequence is MVWALPRTSSPSCIAPSYKPDSGWIKMSAEWLIDWSCLLNGLRDLIAGCIQAVRDCN. The helical transmembrane segment at 58 to 78 threads the bilayer; that stretch reads SFALTTVICLLMLFAWYCYRV. Residues 79-370 are Lumenal-facing; sequence GKDQPRSPFA…ALDSIFAPGR (292 aa). The N-linked (GlcNAc...) asparagine glycan is linked to Asn-212. Residues Trp-229 and Ser-273 each contribute to the 2-oxoglutarate site. His-284 is a Fe cation binding site. 293-295 serves as a coordination point for 2-oxoglutarate; sequence RCH. His-329 contacts Fe cation. Arg-342 contributes to the 2-oxoglutarate binding site.

The protein belongs to the aspartyl/asparaginyl beta-hydroxylase family. Requires Fe cation as cofactor.

Its subcellular location is the membrane. In terms of biological role, may function as 2-oxoglutarate-dependent dioxygenase. The sequence is that of Aspartate beta-hydroxylase domain-containing protein 2 (asphd2) from Xenopus tropicalis (Western clawed frog).